Here is a 153-residue protein sequence, read N- to C-terminus: 3-hydroxyacyl-[acyl-carrier-protein] dehydratase FabZ (153 aa).

His57 is an active-site residue.

The protein belongs to the thioester dehydratase family. FabZ subfamily.

Its subcellular location is the cytoplasm. It carries out the reaction a (3R)-hydroxyacyl-[ACP] = a (2E)-enoyl-[ACP] + H2O. Functionally, involved in unsaturated fatty acids biosynthesis. Catalyzes the dehydration of short chain beta-hydroxyacyl-ACPs and long chain saturated and unsaturated beta-hydroxyacyl-ACPs. The sequence is that of 3-hydroxyacyl-[acyl-carrier-protein] dehydratase FabZ from Aeromonas salmonicida (strain A449).